The chain runs to 199 residues: MFIAFEGIDGSGKSTQLVLLEKYLINRGKKVIKVREPGGTILGEKIRDLLLNFNMNKRSELLLFLASRAQLVEEVIRPSIEKGYFVLADRFSDSSIAYQGGARNLGKDLVEKLNIFATNGIFPDIVFFIDIPVQMAVRRMKEKEKDRIEKEGEDFLEKVRTTYLHIAKSRKNFFVIDGTKDVDYVFSQIKRIIDTMLDH.

Residue 7 to 14 (GIDGSGKS) coordinates ATP.

The protein belongs to the thymidylate kinase family.

The enzyme catalyses dTMP + ATP = dTDP + ADP. Its function is as follows. Phosphorylation of dTMP to form dTDP in both de novo and salvage pathways of dTTP synthesis. This is Thymidylate kinase from Thermosipho melanesiensis (strain DSM 12029 / CIP 104789 / BI429).